Consider the following 372-residue polypeptide: MKIGIPKEIKNNENRVAMTPAGVVSLTHAGHERLAIETGGGIGSSFTDAEYVAAGAAYRCIGKEAWAQEMILKVKEPVASEYDYFYEGQILFTYLHLAPRAELTQALIDKKVVGIAYETVQLANGSLPLLTPMSEVAGKMATQIGAQYLEKNHGGKGILLGGVSGVHARKVTVIGGGIAGTNAAKIAVGMGADVTVIDLSPERLRQLEDMFGRDVQTLMSNPYNIAESVKHSDLVVGAVLIPGAKAPKLVSEEMIQSMQPGSVVVDIAIDQGGIFATSDRVTTHDDPTYVKHGVVHYAVANMPGAVPRTSTIALTNNTIPYALQIANKGYKQACIDNPALKKGVNALEGHITYKAVAEAQGLPYVNVDELIQ.

Substrate contacts are provided by Arg15 and Lys75. The active-site Proton donor/acceptor is the His96. Residues Ser134, 178-179 (IA), Asp198, Ser220, 239-240 (VL), 267-270 (IAID), Arg280, and 299-302 (VANM) each bind NAD(+). The active-site Proton donor/acceptor is Asp270.

It belongs to the AlaDH/PNT family. Homohexamer.

Its subcellular location is the cytoplasm. It carries out the reaction L-alanine + NAD(+) + H2O = pyruvate + NH4(+) + NADH + H(+). It participates in amino-acid degradation; L-alanine degradation via dehydrogenase pathway; NH(3) and pyruvate from L-alanine: step 1/1. Inhibited by p-chloromercuribenzoate and HgCl(2) and by Cu(2+) and Pb(2+) salts, unaffected by amino acids such as D-alanine and beta-alanine or by nucleotides or nucleosides. Its function is as follows. Catalyzes the reversible reductive amination of pyruvate to L-alanine. Prefers L-alanine for oxidative deamination, other substrates are poorly reactive. In the other direction 2-oxobutyrate is almost as reactive as pyruvate. Ammonia is the sole amino donor for the reductive amination of pyruvate, NADPH is inert. Reductive amination proceeds through a sequential, ordered ternary-binary mechanism, where NADH binds first followed by ammonia and pyruvate; the products are released in the order L-alanine and NAD(+). A key factor in the assimilation of L-alanine as an energy source via the tricarboxylic acid cycle during sporulation. The chain is Alanine dehydrogenase (ald) from Lysinibacillus sphaericus (Bacillus sphaericus).